A 160-amino-acid polypeptide reads, in one-letter code: MSGGAGVPDLPQIDASGMKVGIVASTWHSTICDALLDGALKVTESANVSEPTVVRVLGAIEIPVVAQALAADHEAVIALGVVIRGQTPHFDYVCDAVTQGLTRVSLDASTPVANGVLTTNTEEQALDRAGLPGSAEDKGAQAAAAALSTALTLQGLRGRS.

5-amino-6-(D-ribitylamino)uracil-binding positions include Trp27, 59–61, and 81–83; these read AIE and VVI. 86 to 87 is a (2S)-2-hydroxy-3-oxobutyl phosphate binding site; that stretch reads QT. His89 functions as the Proton donor in the catalytic mechanism. Position 114 (Asn114) interacts with 5-amino-6-(D-ribitylamino)uracil. Residue Arg128 participates in (2S)-2-hydroxy-3-oxobutyl phosphate binding.

This sequence belongs to the DMRL synthase family. Homopentamer.

It catalyses the reaction (2S)-2-hydroxy-3-oxobutyl phosphate + 5-amino-6-(D-ribitylamino)uracil = 6,7-dimethyl-8-(1-D-ribityl)lumazine + phosphate + 2 H2O + H(+). Its pathway is cofactor biosynthesis; riboflavin biosynthesis; riboflavin from 2-hydroxy-3-oxobutyl phosphate and 5-amino-6-(D-ribitylamino)uracil: step 1/2. Its function is as follows. Catalyzes the formation of 6,7-dimethyl-8-ribityllumazine by condensation of 5-amino-6-(D-ribitylamino)uracil with 3,4-dihydroxy-2-butanone 4-phosphate. This is the penultimate step in the biosynthesis of riboflavin. This Mycobacterium sp. (strain JLS) protein is 6,7-dimethyl-8-ribityllumazine synthase.